Reading from the N-terminus, the 31-residue chain is Hemocyanin subunit 1 (31 aa).

Belongs to the tyrosinase family. Hemocyanin subfamily. As to expression, hemolymph.

It localises to the secreted. Its subcellular location is the extracellular space. In terms of biological role, hemocyanins are copper-containing oxygen carriers occurring freely dissolved in the hemolymph of many mollusks and arthropods. The protein is Hemocyanin subunit 1 of Homarus americanus (American lobster).